The following is a 396-amino-acid chain: Purine ribonucleoside efflux pump NepI (396 aa).

Topologically, residues 1-21 are cytoplasmic; that stretch reads MSEFIAENRGANAITRPNWSA. A helical membrane pass occupies residues 22–42; sequence VFSVAFCVACLIIVEFLPVSL. Topologically, residues 43–54 are periplasmic; sequence LTPMAQDLGISE. The helical transmembrane segment at 55–75 threads the bilayer; the sequence is GVAGQSVTVTAFVAMFASLFI. Residues 76–85 lie on the Cytoplasmic side of the membrane; it reads TQTIQATDRR. Residues 86-106 form a helical membrane-spanning segment; sequence YVVILFAVLLTLSCLLVSFAN. S107 is a topological domain (periplasmic). The helical transmembrane segment at 108 to 128 threads the bilayer; the sequence is FSLLLIGRACLGVALGGFWAI. The Cytoplasmic segment spans residues 129 to 147; the sequence is SASLTMRLVPPRTVPKALS. Residues 148–168 form a helical membrane-spanning segment; it reads VIFGAVSIALVIAAPLGSFLG. The Periplasmic portion of the chain corresponds to 169–175; sequence ELIGWRN. The helical transmembrane segment at 176-196 threads the bilayer; that stretch reads VFNAAAAMGVLCIFWIIKSLP. Topologically, residues 197–215 are cytoplasmic; that stretch reads SLPGEPSHQKQNTFRLLQR. The chain crosses the membrane as a helical span at residues 216–236; sequence PGVMAGMIAIFMSFAGQFAFF. Topologically, residues 237-255 are periplasmic; that stretch reads TYIRPVYMNLAGFGVDGLT. Residues 256–276 traverse the membrane as a helical segment; it reads LVLLSFGIASFVGTSLSSFIL. Residues 277–281 lie on the Cytoplasmic side of the membrane; that stretch reads KRSVK. Residues 282–302 form a helical membrane-spanning segment; the sequence is LALAGAPFVLALSALVLTLWG. The Periplasmic segment spans residues 303–305; the sequence is SDK. Residues 306 to 326 traverse the membrane as a helical segment; the sequence is IVATGVAIIWGLTFALIPVGW. Over 327–343 the chain is Cytoplasmic; the sequence is STWITRSLADQAEKAGS. Residues 344–364 traverse the membrane as a helical segment; sequence IQVAVIQLANTCGAAIGGYAL. The Periplasmic portion of the chain corresponds to 365–366; sequence DN. A helical transmembrane segment spans residues 367–387; it reads IGLTSPLMLSGTLMLLTALLV. Residues 388–396 lie on the Cytoplasmic side of the membrane; sequence TAKVKMKKS.

It belongs to the major facilitator superfamily. DHA1 family. NepI (TC 2.A.1.2.26) subfamily.

Its subcellular location is the cell inner membrane. The enzyme catalyses inosine(in) + H(+)(out) = inosine(out) + H(+)(in). It carries out the reaction guanosine(in) + H(+)(out) = guanosine(out) + H(+)(in). Its function is as follows. Involved in the efflux of purine ribonucleosides, such as inosine and guanosine. The polypeptide is Purine ribonucleoside efflux pump NepI (Escherichia coli O6:K15:H31 (strain 536 / UPEC)).